The chain runs to 150 residues: Arginine repressor (150 aa).

Belongs to the ArgR family.

It localises to the cytoplasm. The protein operates within amino-acid biosynthesis; L-arginine biosynthesis [regulation]. Its function is as follows. Regulates arginine biosynthesis genes. The chain is Arginine repressor from Clostridium beijerinckii (strain ATCC 51743 / NCIMB 8052) (Clostridium acetobutylicum).